We begin with the raw amino-acid sequence, 461 residues long: Mannose-6-phosphate isomerase (461 aa).

Residues Q107, H109, E134, and H291 each contribute to the Zn(2+) site. Residue R310 is part of the active site.

The protein belongs to the mannose-6-phosphate isomerase type 1 family. Requires Zn(2+) as cofactor.

Its subcellular location is the cytoplasm. The catalysed reaction is D-mannose 6-phosphate = D-fructose 6-phosphate. The protein operates within nucleotide-sugar biosynthesis; GDP-alpha-D-mannose biosynthesis; alpha-D-mannose 1-phosphate from D-fructose 6-phosphate: step 1/2. Involved in the synthesis of the GDP-mannose and dolichol-phosphate-mannose required for a number of critical mannosyl transfer reactions. The sequence is that of Mannose-6-phosphate isomerase (manA) from Emericella nidulans (strain FGSC A4 / ATCC 38163 / CBS 112.46 / NRRL 194 / M139) (Aspergillus nidulans).